Consider the following 195-residue polypeptide: Imidazoleglycerol-phosphate dehydratase (195 aa).

It belongs to the imidazoleglycerol-phosphate dehydratase family.

Its subcellular location is the cytoplasm. The catalysed reaction is D-erythro-1-(imidazol-4-yl)glycerol 3-phosphate = 3-(imidazol-4-yl)-2-oxopropyl phosphate + H2O. Its pathway is amino-acid biosynthesis; L-histidine biosynthesis; L-histidine from 5-phospho-alpha-D-ribose 1-diphosphate: step 6/9. In Heliobacterium modesticaldum (strain ATCC 51547 / Ice1), this protein is Imidazoleglycerol-phosphate dehydratase.